The sequence spans 286 residues: Shikimate dehydrogenase (NADP(+)) (286 aa).

Shikimate is bound by residues 21–23 (TLS) and Thr68. Lys72 acts as the Proton acceptor in catalysis. Residue Glu84 coordinates NADP(+). Residues Asn93 and Asp108 each contribute to the shikimate site. NADP(+) is bound by residues 132-136 (GNGGA) and Leu230. Residue Tyr232 coordinates shikimate. Gly253 serves as a coordination point for NADP(+).

It belongs to the shikimate dehydrogenase family. As to quaternary structure, homodimer.

It catalyses the reaction shikimate + NADP(+) = 3-dehydroshikimate + NADPH + H(+). It participates in metabolic intermediate biosynthesis; chorismate biosynthesis; chorismate from D-erythrose 4-phosphate and phosphoenolpyruvate: step 4/7. Involved in the biosynthesis of the chorismate, which leads to the biosynthesis of aromatic amino acids. Catalyzes the reversible NADPH linked reduction of 3-dehydroshikimate (DHSA) to yield shikimate (SA). In Microcystis aeruginosa (strain NIES-843 / IAM M-2473), this protein is Shikimate dehydrogenase (NADP(+)).